The following is a 230-amino-acid chain: Lipoprotein-releasing system ATP-binding protein LolD (230 aa).

The region spanning 10-228 is the ABC transporter domain; that stretch reads LRAEHLSKVY…QLHMANGRLL (219 aa). 46-53 lines the ATP pocket; the sequence is GASGSGKS.

It belongs to the ABC transporter superfamily. Lipoprotein translocase (TC 3.A.1.125) family. The complex is composed of two ATP-binding proteins (LolD) and two transmembrane proteins (LolC and LolE).

It is found in the cell inner membrane. Its function is as follows. Part of the ABC transporter complex LolCDE involved in the translocation of mature outer membrane-directed lipoproteins, from the inner membrane to the periplasmic chaperone, LolA. Responsible for the formation of the LolA-lipoprotein complex in an ATP-dependent manner. This Bordetella avium (strain 197N) protein is Lipoprotein-releasing system ATP-binding protein LolD.